The chain runs to 208 residues: Ribosomal RNA large subunit methyltransferase E (208 aa).

Residues glycine 61, tryptophan 63, aspartate 81, aspartate 97, and aspartate 122 each contribute to the S-adenosyl-L-methionine site. Lysine 162 (proton acceptor) is an active-site residue.

It belongs to the class I-like SAM-binding methyltransferase superfamily. RNA methyltransferase RlmE family.

It localises to the cytoplasm. It carries out the reaction uridine(2552) in 23S rRNA + S-adenosyl-L-methionine = 2'-O-methyluridine(2552) in 23S rRNA + S-adenosyl-L-homocysteine + H(+). Specifically methylates the uridine in position 2552 of 23S rRNA at the 2'-O position of the ribose in the fully assembled 50S ribosomal subunit. This chain is Ribosomal RNA large subunit methyltransferase E, found in Pseudomonas entomophila (strain L48).